The chain runs to 92 residues: Phosphoribosyl-ATP pyrophosphatase (92 aa).

This sequence belongs to the PRA-PH family.

It is found in the cytoplasm. The catalysed reaction is 1-(5-phospho-beta-D-ribosyl)-ATP + H2O = 1-(5-phospho-beta-D-ribosyl)-5'-AMP + diphosphate + H(+). Its pathway is amino-acid biosynthesis; L-histidine biosynthesis; L-histidine from 5-phospho-alpha-D-ribose 1-diphosphate: step 2/9. This Leptospira interrogans serogroup Icterohaemorrhagiae serovar copenhageni (strain Fiocruz L1-130) protein is Phosphoribosyl-ATP pyrophosphatase.